Consider the following 238-residue polypeptide: Ribonuclease PH (238 aa).

Phosphate contacts are provided by residues Arg86 and 124 to 126 (GTR).

This sequence belongs to the RNase PH family. Homohexameric ring arranged as a trimer of dimers.

It catalyses the reaction tRNA(n+1) + phosphate = tRNA(n) + a ribonucleoside 5'-diphosphate. Functionally, phosphorolytic 3'-5' exoribonuclease that plays an important role in tRNA 3'-end maturation. Removes nucleotide residues following the 3'-CCA terminus of tRNAs; can also add nucleotides to the ends of RNA molecules by using nucleoside diphosphates as substrates, but this may not be physiologically important. Probably plays a role in initiation of 16S rRNA degradation (leading to ribosome degradation) during starvation. This is Ribonuclease PH from Aliivibrio fischeri (strain ATCC 700601 / ES114) (Vibrio fischeri).